The chain runs to 282 residues: Release factor glutamine methyltransferase (282 aa).

S-adenosyl-L-methionine contacts are provided by residues 120 to 124, Asp143, and Asn189; that span reads GVGSG. 189-192 contacts substrate; the sequence is NPPY.

It belongs to the protein N5-glutamine methyltransferase family. PrmC subfamily.

The enzyme catalyses L-glutaminyl-[peptide chain release factor] + S-adenosyl-L-methionine = N(5)-methyl-L-glutaminyl-[peptide chain release factor] + S-adenosyl-L-homocysteine + H(+). In terms of biological role, methylates the class 1 translation termination release factors RF1/PrfA and RF2/PrfB on the glutamine residue of the universally conserved GGQ motif. This is Release factor glutamine methyltransferase from Dictyoglomus turgidum (strain DSM 6724 / Z-1310).